Consider the following 354-residue polypeptide: Uroporphyrinogen decarboxylase (354 aa).

Residues 27–31 (RQAGR), Asp77, Tyr154, Thr209, and His327 contribute to the substrate site.

This sequence belongs to the uroporphyrinogen decarboxylase family. Homodimer.

The protein resides in the cytoplasm. It carries out the reaction uroporphyrinogen III + 4 H(+) = coproporphyrinogen III + 4 CO2. The protein operates within porphyrin-containing compound metabolism; protoporphyrin-IX biosynthesis; coproporphyrinogen-III from 5-aminolevulinate: step 4/4. Functionally, catalyzes the decarboxylation of four acetate groups of uroporphyrinogen-III to yield coproporphyrinogen-III. In Pectobacterium carotovorum subsp. carotovorum (strain PC1), this protein is Uroporphyrinogen decarboxylase.